Consider the following 487-residue polypeptide: Recombining binding protein suppressor of hairless (487 aa).

DNA-binding stretches follow at residues 44 to 54 (QKSYGNEKRFF) and 152 to 157 (SKPSKK). Residue lysine 162 is modified to N6-acetyllysine. Residues 179 to 184 (RLRSQT) form a DNA-binding region. Positions 342–432 (PVVESLQLNG…YSTSLTFTYT (91 aa)) constitute an IPT/TIG domain. The span at 452–468 (SSQVPPNESNTNSEGSY) shows a compositional bias: polar residues. The segment at 452–487 (SSQVPPNESNTNSEGSYTNVSTNSTSVTSSTATVVS) is disordered. Residues 469 to 487 (TNVSTNSTSVTSSTATVVS) are compositionally biased toward low complexity.

It belongs to the Su(H) family. In terms of assembly, interacts with activated NOTCH1, NOTCH2 or NOTCH3. Interacts with MINT/SHARP. This interaction may mediate the recruitment of large corepressor complexes containing proteins such as HDAC1, HDAC2, NCOR2, SAP30, FHL1/KYOT2 and CIR1. Interacts with EP300, MAML1 and PTF1A. Interacts with RITA1, leading to nuclear export, prevent the interaction between RBPJ and NICD product and subsequent down-regulation of the Notch signaling pathway. Interacts with SNW1. Interacts with CHCHD2 and CXXC5. Interacts with BEND6 (via BEN domain). Interacts with NKAPL. Interacts with ZMIZ1. Interacts with RBM15. Interacts with L3MBTL3 and KDM1A; the interaction with KDM1A is weaker in the absence of L3MBTL3 and the interaction with L3MBTL3 is impaired by Notch-derived peptides containing the intracellular domain (NICD).

Its subcellular location is the nucleus. It is found in the cytoplasm. Functionally, transcriptional regulator that plays a central role in Notch signaling, a signaling pathway involved in cell-cell communication that regulates a broad spectrum of cell-fate determinations. Acts as a transcriptional repressor when it is not associated with Notch proteins. When associated with some NICD product of Notch proteins (Notch intracellular domain), it acts as a transcriptional activator that activates transcription of Notch target genes. Probably represses or activates transcription via the recruitment of chromatin remodeling complexes containing histone deacetylase or histone acetylase proteins, respectively. Specifically binds to the immunoglobulin kappa-type J segment recombination signal sequence. Binds specifically to methylated DNA. Binds to the oxygen responsive element of COX4I2 and activates its transcription under hypoxia conditions (4% oxygen). Negatively regulates the phagocyte oxidative burst in response to bacterial infection by repressing transcription of NADPH oxidase subunits. The sequence is that of Recombining binding protein suppressor of hairless (RBPJ) from Bos taurus (Bovine).